The primary structure comprises 279 residues: MQQPMNYPCPQIFWVDSSATSSWAPPGSVFPCPSCGPRGPDQRRPPPPPPPVSPLPPPSQPLPLPPLTPLKKKDHNTNLWLPVVFFMVLVALVGMGLGMYQLFHLQKELAELREFTNQSLKVSSFEKQIANPSTPSEKKEPRSVAHLTGNPHSRSIPLEWEDTYGTALISGVKYKKGGLVINETGLYFVYSKVYFRGQSCNNQPLNHKVYMRNSKYPEDLVLMEEKRLNYCTTGQIWAHSSYLGAVFNLTSADHLYVNISQLSLINFEESKTFFGLYKL.

The Cytoplasmic portion of the chain corresponds to 1 to 78; the sequence is MQQPMNYPCP…PLKKKDHNTN (78 aa). Residues 30–70 are disordered; it reads FPCPSCGPRGPDQRRPPPPPPPVSPLPPPSQPLPLPPLTPL. The segment covering 45 to 68 has biased composition (pro residues); the sequence is PPPPPPPVSPLPPPSQPLPLPPLT. The helical; Signal-anchor for type II membrane protein transmembrane segment at 79–100 threads the bilayer; that stretch reads LWLPVVFFMVLVALVGMGLGMY. Residues 101-279 lie on the Extracellular side of the membrane; the sequence is QLFHLQKELA…SKTFFGLYKL (179 aa). Asn-117 carries an N-linked (GlcNAc...) asparagine glycan. Residues 126–135 show a composition bias toward polar residues; that stretch reads EKQIANPSTP. The segment at 126 to 150 is disordered; sequence EKQIANPSTPSEKKEPRSVAHLTGN. The 137-residue stretch at 143-279 folds into the THD domain; sequence SVAHLTGNPH…SKTFFGLYKL (137 aa). N-linked (GlcNAc...) asparagine glycosylation is present at Asn-182. A disulfide bridge links Cys-200 with Cys-231. 2 N-linked (GlcNAc...) asparagine glycosylation sites follow: Asn-248 and Asn-258.

It belongs to the tumor necrosis factor family. Homotrimer. Interacts with ARHGAP9, BAIAP2L1, BTK, CACNB3, CACNB4, CRK, DLG2, DNMBP, DOCK4, EPS8L3, FGR, FYB1, FYN, HCK, ITK, ITSN2, KALRN, LYN, MACC1, MIA, MPP4, MYO15A, NCF1, NCK1, NCK2, NCKIPSD, OSTF1, PIK3R1, PSTPIP1, RIMBP3C, SAMSN1, SH3GL3, SH3PXD2B, SH3PXD2A, SH3RF2, SKAP2, SNX33, SNX9, SORBS3, SPTA1, SRC, SRGAP1, SRGAP2, SRGAP3, TEC, TJP3 and YES1. Post-translationally, the soluble form derives from the membrane form by proteolytic processing. The membrane-bound form undergoes two successive intramembrane proteolytic cleavages. The first one is processed by ADAM10 producing an N-terminal fragment, which lacks the receptor-binding extracellular domain. This ADAM10-processed FasL (FAsL APL) remnant form is still membrane anchored and further processed by SPPL2A that liberates the FasL intracellular domain (FasL ICD). FasL shedding by ADAM10 is a prerequisite for subsequent intramembrane cleavage by SPPL2A in T-cells. Phosphorylated by FGR on tyrosine residues; this is required for ubiquitination and subsequent internalization. In terms of processing, N-glycosylated. Glycosylation enhances apoptotic activity. Post-translationally, monoubiquitinated. In terms of tissue distribution, expressed in T-cells. Expressed in natural killer cells.

Its subcellular location is the cell membrane. It localises to the cytoplasmic vesicle lumen. The protein localises to the lysosome lumen. It is found in the secreted. The protein resides in the nucleus. Cytokine that binds to TNFRSF6/FAS, a receptor that transduces the apoptotic signal into cells. Involved in cytotoxic T-cell-mediated apoptosis, natural killer cell-mediated apoptosis and in T-cell development. Initiates fratricidal/suicidal activation-induced cell death (AICD) in antigen-activated T-cells contributing to the termination of immune responses. TNFRSF6/FAS-mediated apoptosis also has a role in the induction of peripheral tolerance. Binds to TNFRSF6B/DcR3, a decoy receptor that blocks apoptosis. In terms of biological role, induces FAS-mediated activation of NF-kappa-B, initiating non-apoptotic signaling pathways. Can induce apoptosis but does not appear to be essential for this process. Its function is as follows. Cytoplasmic form induces gene transcription inhibition. This Mus musculus (Mouse) protein is Tumor necrosis factor ligand superfamily member 6 (Faslg).